The sequence spans 1461 residues: Regulation of nuclear pre-mRNA domain-containing protein 2 (1461 aa).

N-acetylalanine is present on Ala2. Phosphoserine is present on Ser16. The CID domain maps to 19–149; the sequence is SAGALESSLD…ALREALSTTF (131 aa). Disordered regions lie at residues 311 to 438 and 469 to 504; these read STLP…TSLS and NTGV…TTSH. A compositionally biased stretch (basic and acidic residues) spans 352–368; the sequence is ESEKSATPEPVTDNRDV. At Ser356 the chain carries Phosphoserine. At Thr358 the chain carries Phosphothreonine. The span at 369–378 shows a compositional bias: acidic residues; it reads EDMELSDVED. Ser374 carries the phosphoserine modification. Positions 379–394 are enriched in basic and acidic residues; the sequence is DGSKIIVEDRKEKPAE. Residues 397–416 show a composition bias toward polar residues; it reads AVSTSVPTKPTENISKASSC. Low complexity-rich tracts occupy residues 417–426 and 473–491; these read TPVPVTMTAT and SPAS…NLTS. Phosphoserine is present on residues Ser473, Ser476, and Ser479. Position 482 is a phosphothreonine (Thr482). Phosphoserine is present on Ser485. Residue Thr517 is modified to Phosphothreonine. The segment at 547–623 is disordered; that stretch reads TGNPVPASEA…SPGLPSTTFK (77 aa). Residues 553-566 are compositionally biased toward low complexity; it reads ASEAASQSTSASPA. Ser564 is subject to Phosphoserine. Residues 567–583 show a composition bias toward polar residues; sequence NTTVSTIKGRNLPSSAQ. Phosphoserine is present on Ser593. Residues 593 to 614 are compositionally biased toward low complexity; it reads SPNSSTSEVSSTSASKASIGQS. Thr598 is subject to Phosphothreonine. 4 positions are modified to phosphoserine: Ser614, Ser663, Ser665, and Ser716. Disordered regions lie at residues 696-849, 900-997, 1016-1102, 1132-1312, and 1340-1461; these read GSSA…MMNL, SENC…EKVL, ASRK…SGEP, STSG…APPL, and FGVL…PPRY. Thr723 carries the post-translational modification Phosphothreonine. Ser730 bears the Phosphoserine mark. Thr732 bears the Phosphothreonine mark. Positions 742–752 are enriched in polar residues; the sequence is PTSSSVDTMSL. 2 positions are modified to phosphoserine: Ser758 and Ser762. The segment covering 758-768 has biased composition (low complexity); the sequence is SPGSSTPSSTR. A Phosphothreonine modification is found at Thr763. A phosphoserine mark is found at Ser769, Ser817, Ser826, Ser900, Ser909, Ser928, Ser965, and Ser976. Positions 927 to 954 are enriched in polar residues; it reads RSPSPSKNDSFFTPDSNHNSLSQSTTGH. Positions 1031–1055 are enriched in polar residues; it reads SKGTPSDGVSLSNLTQPSLTATDQQ. A phosphoserine mark is found at Ser1068 and Ser1099. Residues 1141 to 1150 show a composition bias toward low complexity; the sequence is GPSSASELAS. A compositionally biased stretch (gly residues) spans 1151–1160; the sequence is LGGGGSGGLT. The span at 1174 to 1189 shows a compositional bias: polar residues; the sequence is FQESVGSFRSNSFNST. Composition is skewed to pro residues over residues 1267 to 1277 and 1290 to 1299; these read FPTPPPPPPPG and STPPPPPPPV. Arg1366 bears the Asymmetric dimethylarginine mark. The segment covering 1382–1391 has biased composition (gly residues); that stretch reads PHGGGGGGGS. Positions 1417–1434 are enriched in basic and acidic residues; that stretch reads PRPDFRPREPFLSRDPFH. Residues Arg1424 and Arg1430 each carry the asymmetric dimethylarginine modification.

Associates with the RNA polymerase II complex.

The polypeptide is Regulation of nuclear pre-mRNA domain-containing protein 2 (RPRD2) (Homo sapiens (Human)).